Here is a 594-residue protein sequence, read N- to C-terminus: DELLA protein 1 (594 aa).

Residues 1-36 (MKREHQESFGGGVISNNNKTNTNHLNSSKNINFGEC) are disordered. Positions 15-30 (SNNNKTNTNHLNSSKN) are enriched in low complexity. The DELLA motif signature appears at 61 to 65 (DELLA). One can recognise a GRAS domain in the interval 207 to 587 (VDTQETGVRL…RSLIATSAWK (381 aa)). The interval 214–268 (VRLVHTLMACAEAIQQKNLKLAEALVKHISLLASLQTGAMRKVASYFAQALARRI) is leucine repeat I (LRI). The tract at residues 216-253 (LVHTLMACAEAIQQKNLKLAEALVKHISLLASLQTGAM) is required for possible homodimerization. The short motif at 221–225 (MACAE) is the LxCxE motif; degenerate element. The interval 285–350 (HMHFYESSPY…GGPPTFRLTG (66 aa)) is VHIID. The VHIID motif lies at 316–320 (VHVID). The leucine repeat II (LRII) stretch occupies residues 364-396 (QVGWKLAQLAQTIGVQFEFRGFVCNSIADLDPN). Residues 406-508 (VAVNSVFELH…EIYLGKQICN (103 aa)) are PFYRE. The short motif at 414-418 (LHTML) is the LXXLL motif; degenerate element. Residues 511-587 (AYEGVDRVER…RSLIATSAWK (77 aa)) form an SAW region.

The protein belongs to the GRAS family. DELLA subfamily. As to quaternary structure, may be a homodimer. Ubiquitinated. Upon GA application it is ubiquitinated, leading to its subsequent degradation. In terms of tissue distribution, strongly expressed in the vascular tissue and endodermis but barely in the inner cortical cells where arbuscule are formed during arbuscular mycorrhizal (AM) symbiosis.

It localises to the nucleus. Its function is as follows. Probable transcriptional regulator that acts as a repressor of the gibberellin (GA) signaling pathway. Probably acts by participating in large multiprotein complexes that repress transcription of GA-inducible genes. Upon GA application, it is degraded by the proteasome, allowing the GA signaling pathway. Together with DELLA2, required to enable arbuscule development during arbuscular mycorrhizal (AM) symbiosis with AM fungi (e.g. Glomus versiforme) via the regulation of RAM1 which, in turn, regulates various AM genes (e.g. NSP1, NSP2, PT4, LEC5, RAM2, EXO70I, STR and RAD1). This chain is DELLA protein 1, found in Medicago truncatula (Barrel medic).